The chain runs to 191 residues: Shikimate kinase (191 aa).

Residue 24 to 29 (GSGKTS) coordinates ATP. A Mg(2+)-binding site is contributed by Thr-28. Substrate-binding residues include Asp-46, Arg-70, and Gly-92. Residue Arg-130 coordinates ATP. Substrate is bound at residue Arg-149.

The protein belongs to the shikimate kinase family. As to quaternary structure, monomer. Mg(2+) serves as cofactor.

It is found in the cytoplasm. It carries out the reaction shikimate + ATP = 3-phosphoshikimate + ADP + H(+). It participates in metabolic intermediate biosynthesis; chorismate biosynthesis; chorismate from D-erythrose 4-phosphate and phosphoenolpyruvate: step 5/7. Its function is as follows. Catalyzes the specific phosphorylation of the 3-hydroxyl group of shikimic acid using ATP as a cosubstrate. This Synechococcus sp. (strain CC9902) protein is Shikimate kinase.